A 106-amino-acid polypeptide reads, in one-letter code: uncharacterized protein (106 aa).

This is an uncharacterized protein from Pseudanabaena tenuis (strain PCC 7409).